The chain runs to 129 residues: Glycine cleavage system H protein (129 aa).

The Lipoyl-binding domain occupies 23 to 105; it reads SAVVGITEHA…YGEGWLAKFS (83 aa). Lys64 is subject to N6-lipoyllysine.

The protein belongs to the GcvH family. The glycine cleavage system is composed of four proteins: P, T, L and H. (R)-lipoate serves as cofactor.

In terms of biological role, the glycine cleavage system catalyzes the degradation of glycine. The H protein shuttles the methylamine group of glycine from the P protein to the T protein. This Herpetosiphon aurantiacus (strain ATCC 23779 / DSM 785 / 114-95) protein is Glycine cleavage system H protein.